Consider the following 92-residue polypeptide: Phosphoribosyl-ATP pyrophosphatase (92 aa).

Belongs to the PRA-PH family.

It is found in the cytoplasm. It catalyses the reaction 1-(5-phospho-beta-D-ribosyl)-ATP + H2O = 1-(5-phospho-beta-D-ribosyl)-5'-AMP + diphosphate + H(+). It functions in the pathway amino-acid biosynthesis; L-histidine biosynthesis; L-histidine from 5-phospho-alpha-D-ribose 1-diphosphate: step 2/9. The polypeptide is Phosphoribosyl-ATP pyrophosphatase (Leptospira interrogans serogroup Icterohaemorrhagiae serovar copenhageni (strain Fiocruz L1-130)).